The sequence spans 213 residues: G2/mitotic-specific cyclin-1 (213 aa).

A disordered region spans residues 1–23 (MKFSEEKNVSNNPTNFEGGLDSR).

The protein belongs to the cyclin family. Cyclin AB subfamily. As to quaternary structure, interacts with the CDC2 protein kinase to form a serine/threonine kinase holoenzyme complex also known as maturation promoting factor (MPF). The cyclin subunit imparts substrate specificity to the complex. Only expressed in organs with dividing cells.

Functionally, essential for the control of the cell cycle at the G2/M (mitosis) transition. The sequence is that of G2/mitotic-specific cyclin-1 from Medicago sativa (Alfalfa).